A 219-amino-acid chain; its full sequence is Octanoyltransferase (219 aa).

Residues 32–207 form the BPL/LPL catalytic domain; sequence ADSGDEIWLL…HLVRQLGYAQ (176 aa). Substrate-binding positions include 71–78, 138–140, and 151–153; these read RGGQVTYH, SLG, and GLA. The active-site Acyl-thioester intermediate is Cys169.

The protein belongs to the LipB family.

It is found in the cytoplasm. It carries out the reaction octanoyl-[ACP] + L-lysyl-[protein] = N(6)-octanoyl-L-lysyl-[protein] + holo-[ACP] + H(+). Its pathway is protein modification; protein lipoylation via endogenous pathway; protein N(6)-(lipoyl)lysine from octanoyl-[acyl-carrier-protein]: step 1/2. Functionally, catalyzes the transfer of endogenously produced octanoic acid from octanoyl-acyl-carrier-protein onto the lipoyl domains of lipoate-dependent enzymes. Lipoyl-ACP can also act as a substrate although octanoyl-ACP is likely to be the physiological substrate. This chain is Octanoyltransferase, found in Stutzerimonas stutzeri (strain A1501) (Pseudomonas stutzeri).